The primary structure comprises 570 residues: Dihydroxy-acid dehydratase (570 aa).

Cys61 serves as a coordination point for [2Fe-2S] cluster. Asp94 serves as a coordination point for Mg(2+). Cys135 provides a ligand contact to [2Fe-2S] cluster. The Mg(2+) site is built by Asp136 and Lys137. Lys137 is subject to N6-carboxylysine. Residue Cys207 coordinates [2Fe-2S] cluster. Glu459 contributes to the Mg(2+) binding site. Ser485 serves as the catalytic Proton acceptor.

It belongs to the IlvD/Edd family. As to quaternary structure, homodimer. Requires [2Fe-2S] cluster as cofactor. It depends on Mg(2+) as a cofactor.

The catalysed reaction is (2R)-2,3-dihydroxy-3-methylbutanoate = 3-methyl-2-oxobutanoate + H2O. It catalyses the reaction (2R,3R)-2,3-dihydroxy-3-methylpentanoate = (S)-3-methyl-2-oxopentanoate + H2O. Its pathway is amino-acid biosynthesis; L-isoleucine biosynthesis; L-isoleucine from 2-oxobutanoate: step 3/4. It participates in amino-acid biosynthesis; L-valine biosynthesis; L-valine from pyruvate: step 3/4. In terms of biological role, functions in the biosynthesis of branched-chain amino acids. Catalyzes the dehydration of (2R,3R)-2,3-dihydroxy-3-methylpentanoate (2,3-dihydroxy-3-methylvalerate) into 2-oxo-3-methylpentanoate (2-oxo-3-methylvalerate) and of (2R)-2,3-dihydroxy-3-methylbutanoate (2,3-dihydroxyisovalerate) into 2-oxo-3-methylbutanoate (2-oxoisovalerate), the penultimate precursor to L-isoleucine and L-valine, respectively. The polypeptide is Dihydroxy-acid dehydratase (Lactococcus lactis subsp. lactis (strain IL1403) (Streptococcus lactis)).